A 221-amino-acid chain; its full sequence is Molybdenum cofactor guanylyltransferase (221 aa).

Residues 18 to 20, Lys-35, Asn-63, Asp-81, and Asp-112 each bind GTP; that span reads IAG. Asp-112 contributes to the Mg(2+) binding site.

The protein belongs to the MobA family. Monomer. Mg(2+) is required as a cofactor.

It is found in the cytoplasm. It catalyses the reaction Mo-molybdopterin + GTP + H(+) = Mo-molybdopterin guanine dinucleotide + diphosphate. Functionally, transfers a GMP moiety from GTP to Mo-molybdopterin (Mo-MPT) cofactor (Moco or molybdenum cofactor) to form Mo-molybdopterin guanine dinucleotide (Mo-MGD) cofactor. This is Molybdenum cofactor guanylyltransferase from Brucella melitensis biotype 2 (strain ATCC 23457).